The following is a 2249-amino-acid chain: Endoribonuclease Dcr-1 (2249 aa).

Residues 1–371 (MAFHWCDNNL…SPKVRRLLQT (371 aa)) form an essential for miRNA substrate recognition region. The important for interaction with loqs isoform PB (loqs-PB) stretch occupies residues 1 to 690 (MAFHWCDNNL…SKQPPTACDI (690 aa)). Residues 1 to 761 (MAFHWCDNNL…AEIDTAHSLA (761 aa)) are helicase domain. The segment at 1–1042 (MAFHWCDNNL…VSLELAKERV (1042 aa)) is necessary for processing certain pre-miRNas, such as pre-let 7 and pre-bantam. 37–44 (LGHRSSKE) lines the ATP pocket. The dispensable for activity and substrate recognition stretch occupies residues 371–491 (TLRCFKPEEV…HHRDHNDGSD (121 aa)). Residues 436–486 (TTEDRQTNRSAARVTPTPTPAHAKPKPSSGANTAQPRTRRRVYTRRHHRDH) form a disordered region. Basic residues predominate over residues 472–484 (RTRRRVYTRRHHR). The Helicase C-terminal domain occupies 485-648 (DHNDGSDTLC…TGDTTEADSD (164 aa)). The essential for miRNA substrate recognition stretch occupies residues 496–606 (LIYCNQNHTA…VQCKGRARAA (111 aa)). The interval 617-761 (SYKSPTVGSV…AEIDTAHSLA (145 aa)) is dispensable for activity and substrate recognition. 2 disordered regions span residues 640–665 (GDTT…PYTF) and 705–757 (LDTS…IDTA). Positions 716–726 (SMSNTSPSESS) are enriched in low complexity. The Dicer dsRNA-binding fold domain occupies 825-920 (AIALVNKYCA…QPIGKEGFRA (96 aa)). Residues 924–957 (DWECFELEPEDEQIVQLSDEPRPGTTKRRQYYYK) form a wing domain region. The tract at residues 963 to 1108 (FCDCRPVAGA…WQFLELIQAN (146 aa)) is platform domain. In terms of domain architecture, PAZ spans 1100–1246 (QFLELIQANG…LVPELCTVHP (147 aa)). Positions 1147 to 2249 (QYFYVAEICP…KKQGLIAKKD (1103 aa)) are essential for production of mature miRNAs from pre-miRNAs. Also important for proper formation of the siRISC complex but is dispensable for biogenesis of siRNAs. The disordered stretch occupies residues 1314–1351 (ESKQKESLKDDTINGKDLADVEKKPTSEETQLDKDSKD). At Ser1423 the chain carries Phosphoserine. The segment at 1426–1477 (FWDVSNGESGFKGPKSSQNKQGGKGKAKGPAKPTFNYYDSDNSLGSSYDDDD) is disordered. The span at 1437–1446 (KGPKSSQNKQ) shows a compositional bias: low complexity. Residues 1462–1471 (YYDSDNSLGS) are compositionally biased toward polar residues. RNase III domains follow at residues 1698 to 1919 (ITSA…IECG) and 1993 to 2150 (FEEF…LDSN). 2 residues coordinate Mg(2+): Glu1745 and Asp1749. A phosphoserine mark is found at Ser1877 and Ser1880. Mg(2+) contacts are provided by Asp1905, Glu1908, Glu2032, Asp2136, and Glu2139. The 67-residue stretch at 2175-2241 (VPKSPIRELL…AKCALRQLKK (67 aa)) folds into the DRBM domain.

It belongs to the helicase family. Dicer subfamily. In terms of assembly, component of the miRNA-directed RISC loading complex (miRLC), composed of at least Dcr-1, AGO1 and loqs, which processes pre-miRNAs and loads the resulting miRNAs into the Argonaute 1 (AGO1)-containing RNA-induced silencing complex (miRISC). Interacts (via helicase domain) with dicing cofactor loqs isoform-PB (loqs-PB) (via DRBM 3 domain); this interaction enhances processing of pre-miRNAs by increasing substrate binding affinity of the dicer. Also able to interact with loqs isoforms PA and PC, however the relevance of such interactions are unclear in vivo. Different regions of the Dcr-1-loqs-PB heterodimer collaborate to recognize, bind and position the pre-miRNA for Dcr-1 mediated cleavage. In the absence of authentic miRNA substrates, the heterodimer favors a closed, catalytically incompetent, conformation, whereas binding of authentic pre-miRNA substrates stabilizes the relatively rare open, catalytically competent, conformation of the heterodimer. During substrate recognition, the Dcr-1 PAZ domain and pre-miRNA interact with the DRBM 1 domain of loqs-PB, which likely contributes to substrate recognition and stabilization. At the miRNA binding stage, the Dcr-1 DRBM domain and loqs-PB DRBM domains then bind the pre-miRNA in tandem to form a tight 'belt' around the pre-miRNA stem, the pre-miRNA loop is docked in the loop-binding region formed by DUF283, DRBM and part of the N terminus of Dcr-1, and the loqs-PB DRBM 1 and the wing domain of Dcr-1 act together to bind the 5' and 3' pre-miRNA termini within the PAZ and platform domains of Dcr-1. These interactions between the proteins and their pre-miRNA substrate stabilize a distorted form of the pre-miRNA and position the scissile phosphodiester bonds of the pre-miRNA at the RNase III catalytic cleavage sites of Dcr-1. Following Dcr-1 mediated cleavage, the miRNA duplex remains bound to loqs-PB DRBM 1, which dissociates from the Dcr-1 RNase III 1 domain but remains in contact with the PAZ and wing domains, suggesting that the heterodimer presents the mature miRNA to Ago2 for loading into the RNA-induced silencing complex (miRISC). Interacts with AGO2 and Fmr1 to form a RNA-induced silencing complex (siRISC), a ribonucleoprotein (RNP) complex involved in translation regulation; other components of the complex are RpL5, RpL11, AGO2 and Rm62. Interacts with piwi and vas; these interactions occur in the polar granules. Mg(2+) serves as cofactor. The cofactor is Mn(2+).

It localises to the cytoplasm. Its subcellular location is the cytosol. The catalysed reaction is Endonucleolytic cleavage to 5'-phosphomonoester.. Its activity is regulated as follows. Activity towards pre-miRNAs is not inhibited by inorganic phosphate. Endoribonuclease which functions in microRNA- (miRNA) gene silencing and, independently of its ribonuclease III activity, also acts in the short interfering RNA- (siRNA) gene silencing pathway. Cleaves hairpin precursor miRNAs (pre-miRNA) to generate mature miRNAs (miRNAs) that are between twenty-one to twenty-four nucleotides in length and function in RNA silencing and post-transcriptional regulation of gene expression. Also functions in miRNA loading and assembly of the Argonaute 1 (AGO1)-containing RNA-induced silencing complex (miRISC), with the miRNAs serving as a guide to direct the miRISC to complementary RNAs to degrade them or prevent their translation. Independently of its catalytic activity, functions in the siRNA silencing pathway by promoting assembly of the siRNA-directed Argonaute 2 (AGO2)-containing RISC (siRISC). Required for the proper formation of a stable intermediate (R2) in siRISC assembly, which is formed from the R1 precursor complex (containing Dcr-2, R2D2 and the siRNA) and is used for assembly of the mature (R3) siRISC complex. It is not required for siRNA biogenesis. During embryogenesis, involved in germline fate determination. Post-transcriptionally regulates mei-P26 expression through the microRNA pathway, which in turn post-translationally regulates myc protein levels; involved in regulating cell and tissue growth. This chain is Endoribonuclease Dcr-1, found in Drosophila melanogaster (Fruit fly).